Reading from the N-terminus, the 172-residue chain is Ribosome maturation factor RimM (172 aa).

Residues 96–168 form the PRC barrel domain; it reads DGEFYYHEII…RVQVELMEGL (73 aa).

It belongs to the RimM family. Binds ribosomal protein uS19.

It localises to the cytoplasm. Functionally, an accessory protein needed during the final step in the assembly of 30S ribosomal subunit, possibly for assembly of the head region. Essential for efficient processing of 16S rRNA. May be needed both before and after RbfA during the maturation of 16S rRNA. It has affinity for free ribosomal 30S subunits but not for 70S ribosomes. This Streptococcus agalactiae serotype Ia (strain ATCC 27591 / A909 / CDC SS700) protein is Ribosome maturation factor RimM.